The following is a 31-amino-acid chain: Jingzhaotoxin F7-15.33 (31 aa).

Intrachain disulfides connect Cys2–Cys16, Cys9–Cys21, and Cys15–Cys28.

It belongs to the neurotoxin 10 (Hwtx-1) family. Expressed by the venom gland.

The protein localises to the secreted. Probable ion channel inhibitor. The chain is Jingzhaotoxin F7-15.33 from Chilobrachys guangxiensis (Chinese earth tiger tarantula).